The chain runs to 190 residues: Imidazoleglycerol-phosphate dehydratase (190 aa).

This sequence belongs to the imidazoleglycerol-phosphate dehydratase family.

Its subcellular location is the cytoplasm. It catalyses the reaction D-erythro-1-(imidazol-4-yl)glycerol 3-phosphate = 3-(imidazol-4-yl)-2-oxopropyl phosphate + H2O. The protein operates within amino-acid biosynthesis; L-histidine biosynthesis; L-histidine from 5-phospho-alpha-D-ribose 1-diphosphate: step 6/9. The chain is Imidazoleglycerol-phosphate dehydratase from Campylobacter hominis (strain ATCC BAA-381 / DSM 21671 / CCUG 45161 / LMG 19568 / NCTC 13146 / CH001A).